Consider the following 437-residue polypeptide: MQINLKFKKKDVRWYLLRLFSNLQFSIILLLVIASFSVIGTIIEQNKDLDFYQAHYSVSGEHFIILNWKNIELFGLNHVYTTWWFLTLLFIFSLSLLVCSLSRQIPSLQNARRWCFYKNPNQFKKFTGSQEIQKTTLHLVASCLQKFNYHIFQQGNSIYCYKGLLGRLAPIFVHASIILLLIGSVLGLVSGFSAQEMVPSGELFRLQNIIASGQFSYIPQDFSARVNNFIIEYNQDNSISQFFSDISILDTEGTELKHSTIHVNSPLQFKGLTIYQTDWDIIAIRIKINNTDTLQIPLKKVVLPNNKIWVGLIAQDQDNQLALVLQDLQKQATLYNKSGEKIMSVTIGEKYFIDNNIIAFLSIVPSTGLQIKSDPGIPIVYTSFFFLITSVSVSYISYSQIWIIEKKHRFYIGGVTNRAQLTFEEELLKISNRSSKI.

3 consecutive transmembrane segments (helical) span residues 23-43 (LQFSIILLLVIASFSVIGTII), 82-102 (TWWFLTLLFIFSLSLLVCSLS), and 168-188 (LAPIFVHASIILLLIGSVLGL).

This sequence belongs to the Ccs1/CcsB family. May interact with CcsA.

Its subcellular location is the plastid. It localises to the chloroplast thylakoid membrane. Required during biogenesis of c-type cytochromes (cytochrome c6 and cytochrome f) at the step of heme attachment. This chain is Cytochrome c biogenesis protein Ccs1, found in Porphyra purpurea (Red seaweed).